The primary structure comprises 759 residues: 1,4-alpha-glucan branching enzyme GlgB (759 aa).

The disordered stretch occupies residues 1–21 (MAKTKGLPKDTAVTPSPHLRP). Aspartate 422 (nucleophile) is an active-site residue. Catalysis depends on glutamate 475, which acts as the Proton donor.

The protein belongs to the glycosyl hydrolase 13 family. GlgB subfamily. As to quaternary structure, monomer.

It catalyses the reaction Transfers a segment of a (1-&gt;4)-alpha-D-glucan chain to a primary hydroxy group in a similar glucan chain.. It functions in the pathway glycan biosynthesis; glycogen biosynthesis. In terms of biological role, catalyzes the formation of the alpha-1,6-glucosidic linkages in glycogen by scission of a 1,4-alpha-linked oligosaccharide from growing alpha-1,4-glucan chains and the subsequent attachment of the oligosaccharide to the alpha-1,6 position. In Mycobacterium sp. (strain JLS), this protein is 1,4-alpha-glucan branching enzyme GlgB.